The chain runs to 447 residues: Tubulin beta-1 chain (447 aa).

Glutamine 11 is a GTP binding site. Serine 40 is subject to Phosphoserine. Glutamate 69, serine 138, glycine 142, threonine 143, glycine 144, asparagine 204, and asparagine 226 together coordinate GTP. Position 69 (glutamate 69) interacts with Mg(2+). Serine 339 carries the post-translational modification Phosphoserine. The segment at glutamate 427–asparagine 447 is disordered. The segment covering threonine 429–asparagine 447 has biased composition (acidic residues).

Belongs to the tubulin family. Dimer of alpha and beta chains. A typical microtubule is a hollow water-filled tube with an outer diameter of 25 nm and an inner diameter of 15 nM. Alpha-beta heterodimers associate head-to-tail to form protofilaments running lengthwise along the microtubule wall with the beta-tubulin subunit facing the microtubule plus end conferring a structural polarity. Microtubules usually have 13 protofilaments but different protofilament numbers can be found in some organisms and specialized cells. Interacts with mgr and Vhl. Mg(2+) serves as cofactor.

It is found in the cytoplasm. The protein localises to the cytoskeleton. In terms of biological role, tubulin is the major constituent of microtubules, a cylinder consisting of laterally associated linear protofilaments composed of alpha- and beta-tubulin heterodimers. Microtubules grow by the addition of GTP-tubulin dimers to the microtubule end, where a stabilizing cap forms. Below the cap, tubulin dimers are in GDP-bound state, owing to GTPase activity of alpha-tubulin. The sequence is that of Tubulin beta-1 chain (betaTub56D) from Drosophila melanogaster (Fruit fly).